Consider the following 167-residue polypeptide: NADH-quinone oxidoreductase subunit I 1 (167 aa).

4Fe-4S ferredoxin-type domains lie at 52-82 (LQRD…IEAA) and 98-127 (KVYN…HGHG). Residues Cys-62, Cys-65, Cys-68, Cys-72, Cys-107, Cys-110, Cys-113, and Cys-117 each coordinate [4Fe-4S] cluster. The disordered stretch occupies residues 148-167 (PVPPGAKPPSMADEVPAGAH).

The protein belongs to the complex I 23 kDa subunit family. NDH-1 is composed of 14 different subunits. Subunits NuoA, H, J, K, L, M, N constitute the membrane sector of the complex. [4Fe-4S] cluster serves as cofactor.

The protein localises to the cell inner membrane. It catalyses the reaction a quinone + NADH + 5 H(+)(in) = a quinol + NAD(+) + 4 H(+)(out). In terms of biological role, NDH-1 shuttles electrons from NADH, via FMN and iron-sulfur (Fe-S) centers, to quinones in the respiratory chain. The immediate electron acceptor for the enzyme in this species is believed to be ubiquinone. Couples the redox reaction to proton translocation (for every two electrons transferred, four hydrogen ions are translocated across the cytoplasmic membrane), and thus conserves the redox energy in a proton gradient. This Solibacter usitatus (strain Ellin6076) protein is NADH-quinone oxidoreductase subunit I 1.